A 784-amino-acid polypeptide reads, in one-letter code: Toll-like receptor 2 (784 aa).

The signal sequence occupies residues 1–20 (MPRALWTAWVWAXIILSTEG). The Extracellular portion of the chain corresponds to 21 to 587 (ASDQASSLSC…ARLSLSECHR (567 aa)). Residues cysteine 30 and cysteine 36 are joined by a disulfide bond. 19 LRR repeats span residues 54–77 (VKSL…RCVN), 78–101 (LKTL…HLRN), 102–125 (LEYL…SLYV), 126–150 (LKFL…HLPN), 151–175 (LXTL…GLTF), 176–199 (LEEL…SIQN), 200–223 (ISHL…IVSS), 224–250 (LDCL…MSTS), 251–278 (VKKL…YVSG), 279–308 (ILEV…HLGN), 309–337 (VETL…LTGK), 338–361 (VKRV…HLKS), 362–388 (LEYL…AWPF), 389–414 (LQTL…TLEN), 415–437 (LNSL…WPGK), 438–457 (MKQL…CLPQ), 458–478 (TLEI…ILPQ), 479–500 (LKEL…FLPV), and 501–524 (LSVM…SFQQ). Asparagine 114 is a glycosylation site (N-linked (GlcNAc...) asparagine). Asparagine 199 carries an N-linked (GlcNAc...) asparagine glycan. Cysteines 353 and 382 form a disulfide. A disulfide bond links cysteine 432 and cysteine 454. An N-linked (GlcNAc...) asparagine glycan is attached at asparagine 442. The region spanning 525 to 579 (LKTLEAGGNNFICSCDFLSFTQGQQALGRVLVDWPDDYRCDSPSHVRGQRVQDAR) is the LRRCT domain. A helical membrane pass occupies residues 588–608 (AAVVSAACCALFLVLLLTGVL). The Cytoplasmic segment spans residues 609–784 (CHRFHGLWYM…WLNLRAAIRS (176 aa)). Positions 639–782 (ICYDAFVSYS…GFWLNLRAAI (144 aa)) constitute a TIR domain. Lysine 754 participates in a covalent cross-link: Glycyl lysine isopeptide (Lys-Gly) (interchain with G-Cter in ubiquitin). Positions 761–778 (YLEWPVDETQQEGFWLNL) match the ATG16L1-binding motif motif.

The protein belongs to the Toll-like receptor family. In terms of assembly, interacts with LY96, TLR1 and TLR6 (via extracellular domain). TLR2 seems to exist in heterodimers with either TLR1 or TLR6 before stimulation by the ligand. The heterodimers form bigger oligomers in response to their corresponding ligands as well as further heterotypic associations with other receptors such as CD14 and/or CD36. Binds MYD88 (via TIR domain). Interacts with TICAM1. Interacts with CNPY3. Interacts with ATG16L1. Interacts with PPP1R11. Interacts with TICAM2. Interacts with TIRAP. In terms of processing, ubiquitinated at Lys-754 by PPP1R11, leading to its degradation. Deubiquitinated by USP2. Post-translationally, glycosylation of Asn-442 is critical for secretion of the N-terminal ectodomain of TLR2.

The protein localises to the membrane. The protein resides in the cytoplasmic vesicle. It is found in the phagosome membrane. It localises to the membrane raft. Cooperates with LY96 to mediate the innate immune response to bacterial lipoproteins and other microbial cell wall components. Cooperates with TLR1 or TLR6 to mediate the innate immune response to bacterial lipoproteins or lipopeptides. Acts via MYD88 and TRAF6, leading to NF-kappa-B activation, cytokine secretion and the inflammatory response. May also promote apoptosis in response to lipoproteins. Forms activation clusters composed of several receptors depending on the ligand, these clusters trigger signaling from the cell surface and subsequently are targeted to the Golgi in a lipid-raft dependent pathway. Forms the cluster TLR2:TLR6:CD14:CD36 in response to diacylated lipopeptides and TLR2:TLR1:CD14 in response to triacylated lipopeptides. The polypeptide is Toll-like receptor 2 (TLR2) (Bison bison (American bison)).